A 567-amino-acid polypeptide reads, in one-letter code: DNA ligase B (567 aa).

Lysine 132 (N6-AMP-lysine intermediate) is an active-site residue.

The protein belongs to the NAD-dependent DNA ligase family. LigB subfamily.

It carries out the reaction NAD(+) + (deoxyribonucleotide)n-3'-hydroxyl + 5'-phospho-(deoxyribonucleotide)m = (deoxyribonucleotide)n+m + AMP + beta-nicotinamide D-nucleotide.. Its function is as follows. Catalyzes the formation of phosphodiester linkages between 5'-phosphoryl and 3'-hydroxyl groups in double-stranded DNA using NAD as a coenzyme and as the energy source for the reaction. The chain is DNA ligase B from Yersinia pestis.